A 119-amino-acid chain; its full sequence is Large ribosomal subunit protein bL20 (119 aa).

This sequence belongs to the bacterial ribosomal protein bL20 family.

Its function is as follows. Binds directly to 23S ribosomal RNA and is necessary for the in vitro assembly process of the 50S ribosomal subunit. It is not involved in the protein synthesizing functions of that subunit. This chain is Large ribosomal subunit protein bL20, found in Laribacter hongkongensis (strain HLHK9).